The sequence spans 204 residues: Large ribosomal subunit protein eL15 (204 aa).

The tract at residues 155-204 (VHKHREQRGLTSAGRKSRGLGKGWRFSATRGGSQAKNWKRKNTKVFHRKR) is disordered. Positions 191-204 (NWKRKNTKVFHRKR) are enriched in basic residues.

This sequence belongs to the eukaryotic ribosomal protein eL15 family.

The protein is Large ribosomal subunit protein eL15 (rpl-15) of Caenorhabditis elegans.